The chain runs to 388 residues: Na(+)/H(+) antiporter NhaA (388 aa).

12 helical membrane passes run 14 to 34 (TIGILLIIATLLALFLENSPL), 59 to 79 (LLLWVNDGLMAVFFFYVGLEI), 95 to 115 (TFPAIAALGGMVVPALLFASL), 125 to 145 (GWAIPTATDIAFALGVLSLLG), 154 to 174 (VFLMTLAIVDDLGAIIVIALF), 177 to 197 (TKLSLTSLVVASIALTILFIM), 200 to 220 (MCVISKGAYILVGVALWVSVL), 222 to 242 (SGVHATLAGVALALLIPYRIN), 257 to 277 (GLHLWVNFFILPLFAFANAGV), 295 to 315 (IMLGLFIGKQLGVFGFGYLAV), 328 to 348 (LIQFYGVAVLAGIGFTMSLFI), and 362 to 382 (ADKLAVLIGSLLSGIWGYIVL).

It belongs to the NhaA Na(+)/H(+) (TC 2.A.33) antiporter family.

It localises to the cell inner membrane. The enzyme catalyses Na(+)(in) + 2 H(+)(out) = Na(+)(out) + 2 H(+)(in). Na(+)/H(+) antiporter that extrudes sodium in exchange for external protons. The protein is Na(+)/H(+) antiporter NhaA of Nitratiruptor sp. (strain SB155-2).